Consider the following 628-residue polypeptide: Alpha-L-arabinofuranosidase A (628 aa).

The signal sequence occupies residues 1 to 25; sequence MVAFSALSGVSAVSLLLSLVQNAHG. N-linked (GlcNAc...) asparagine glycans are attached at residues Asn36, Asn51, Asn74, Asn152, Asn171, Asn260, Asn359, Asn440, Asn493, and Asn610.

It belongs to the glycosyl hydrolase 51 family.

It catalyses the reaction Hydrolysis of terminal non-reducing alpha-L-arabinofuranoside residues in alpha-L-arabinosides.. The protein operates within glycan metabolism; L-arabinan degradation. Functionally, acts only on small linear 1,5-alpha-linked L-arabinofuranosyl oligosaccharides. The sequence is that of Alpha-L-arabinofuranosidase A (abfA) from Aspergillus niger.